The sequence spans 1606 residues: Thrombospondin type-1 domain-containing protein 7B (1606 aa).

A signal peptide spans Met1–Ala31. At Ala32–Lys1555 the chain is on the extracellular side. TSP type-1 domains are found at residues Asn40–Asp98, Asp102–Pro177, Asp179–Pro233, Asp336–Gly392, Pro399–Ser482, Asp484–Tyr543, Asp601–Met661, Gln662–Lys735, Asp737–Pro796, Val797–Arg869, Asp871–Asp924, Glu925–Pro998, Asp1000–Pro1125, Glu1127–Phe1181, Gln1182–Val1245, Asn1247–Tyr1302, Ser1303–Pro1368, and Asp1370–Tyr1431. N-linked (GlcNAc...) asparagine glycosylation is found at Asn150, Asn190, and Asn219. Intrachain disulfides connect Cys411-Cys477, Cys431-Cys481, and Cys442-Cys466. 3 disulfides stabilise this stretch: Cys602/Cys643, Cys613/Cys617, and Cys655/Cys660. An N-linked (GlcNAc...) asparagine glycan is attached at Asn683. 3 cysteine pairs are disulfide-bonded: Cys738–Cys779, Cys749–Cys753, and Cys789–Cys795. Asn757 is a glycosylation site (N-linked (GlcNAc...) asparagine). A glycan (N-linked (GlcNAc...) asparagine) is linked at Asn842. Cystine bridges form between Cys872-Cys907, Cys883-Cys887, and Cys921-Cys923. N-linked (GlcNAc...) asparagine glycosylation occurs at Asn933. Intrachain disulfides connect Cys937/Cys993, Cys959/Cys997, Cys970/Cys983, Cys1001/Cys1038, Cys1012/Cys1016, and Cys1120/Cys1124. The N-linked (GlcNAc...) asparagine glycan is linked to Asn1186. Cystine bridges form between Cys1248–Cys1286, Cys1259–Cys1263, and Cys1296–Cys1301. A glycan (N-linked (GlcNAc...) asparagine) is linked at Asn1308. Cystine bridges form between Cys1371/Cys1415, Cys1382/Cys1386, and Cys1425/Cys1430. N-linked (GlcNAc...) asparagine glycosylation is found at Asn1456 and Asn1524. The chain crosses the membrane as a helical span at residues Ile1556–Ser1576. The Cytoplasmic segment spans residues Tyr1577–Met1606. A disordered region spans residues Pro1583–Met1606. Positions His1586 to Pro1595 are enriched in polar residues.

Its subcellular location is the membrane. The chain is Thrombospondin type-1 domain-containing protein 7B from Homo sapiens (Human).